A 420-amino-acid chain; its full sequence is UDP-N-acetylglucosamine 1-carboxyvinyltransferase (420 aa).

22-23 (KN) is a phosphoenolpyruvate binding site. Arg-93 contributes to the UDP-N-acetyl-alpha-D-glucosamine binding site. Catalysis depends on Cys-117, which acts as the Proton donor. At Cys-117 the chain carries 2-(S-cysteinyl)pyruvic acid O-phosphothioketal. Residues 122–126 (RPVDL), Asp-307, and Val-329 contribute to the UDP-N-acetyl-alpha-D-glucosamine site.

Belongs to the EPSP synthase family. MurA subfamily.

Its subcellular location is the cytoplasm. The enzyme catalyses phosphoenolpyruvate + UDP-N-acetyl-alpha-D-glucosamine = UDP-N-acetyl-3-O-(1-carboxyvinyl)-alpha-D-glucosamine + phosphate. Its pathway is cell wall biogenesis; peptidoglycan biosynthesis. Cell wall formation. Adds enolpyruvyl to UDP-N-acetylglucosamine. This Hahella chejuensis (strain KCTC 2396) protein is UDP-N-acetylglucosamine 1-carboxyvinyltransferase.